We begin with the raw amino-acid sequence, 429 residues long: Adenylosuccinate synthetase (429 aa).

Residues 12–18 (GDEGKGK) and 40–42 (GHT) each bind GTP. Asp-13 acts as the Proton acceptor in catalysis. Mg(2+) contacts are provided by Asp-13 and Gly-40. IMP is bound by residues 13–16 (DEGK), 38–41 (NAGH), Thr-128, Arg-142, Gln-223, Thr-238, and Arg-302. His-41 functions as the Proton donor in the catalytic mechanism. 298–304 (VNTGRKR) contributes to the substrate binding site. Residues Arg-304, 330–332 (KLD), and 412–414 (GVG) contribute to the GTP site.

The protein belongs to the adenylosuccinate synthetase family. As to quaternary structure, homodimer. The cofactor is Mg(2+).

It is found in the cytoplasm. It catalyses the reaction IMP + L-aspartate + GTP = N(6)-(1,2-dicarboxyethyl)-AMP + GDP + phosphate + 2 H(+). Its pathway is purine metabolism; AMP biosynthesis via de novo pathway; AMP from IMP: step 1/2. In terms of biological role, plays an important role in the de novo pathway of purine nucleotide biosynthesis. Catalyzes the first committed step in the biosynthesis of AMP from IMP. In Corynebacterium efficiens (strain DSM 44549 / YS-314 / AJ 12310 / JCM 11189 / NBRC 100395), this protein is Adenylosuccinate synthetase.